Consider the following 348-residue polypeptide: Photosystem II protein D1 (348 aa).

3 helical membrane-spanning segments follow: residues 33–50 (YIGW…LATV), 122–137 (HFIF…EWEF), and 146–160 (WIFV…ASCA). Residue His122 coordinates chlorophyll a. Pheophytin a is bound at residue Trp130. [CaMn4O5] cluster contacts are provided by Asp174 and Glu193. Residues 201 to 222 (FHILGVAGVFGGSLFSAMHGSL) form a helical membrane-spanning segment. His202 is a chlorophyll a binding site. Residues His219 and 268–269 (SF) each bind a quinone. A Fe cation-binding site is contributed by His219. His276 is a Fe cation binding site. Residues 278–292 (FLAAWPVIGIWFTAL) form a helical membrane-spanning segment. His336, Glu337, Asp346, and Ala348 together coordinate [CaMn4O5] cluster.

Belongs to the reaction center PufL/M/PsbA/D family. PSII is composed of 1 copy each of membrane proteins PsbA, PsbB, PsbC, PsbD, PsbE, PsbF, PsbH, PsbI, PsbJ, PsbK, PsbL, PsbM, PsbT, PsbX, PsbY, PsbZ, Psb30/Ycf12, at least 3 peripheral proteins of the oxygen-evolving complex and a large number of cofactors. It forms dimeric complexes. Requires The D1/D2 heterodimer binds P680, chlorophylls that are the primary electron donor of PSII, and subsequent electron acceptors. It shares a non-heme iron and each subunit binds pheophytin, quinone, additional chlorophylls, carotenoids and lipids. D1 provides most of the ligands for the Mn4-Ca-O5 cluster of the oxygen-evolving complex (OEC). There is also a Cl(-1) ion associated with D1 and D2, which is required for oxygen evolution. The PSII complex binds additional chlorophylls, carotenoids and specific lipids. as cofactor. Tyr-165 forms a radical intermediate that is referred to as redox-active TyrZ, YZ or Y-Z.

The protein localises to the plastid. Its subcellular location is the chloroplast thylakoid membrane. The catalysed reaction is 2 a plastoquinone + 4 hnu + 2 H2O = 2 a plastoquinol + O2. In terms of biological role, photosystem II (PSII) is a light-driven water:plastoquinone oxidoreductase that uses light energy to abstract electrons from H(2)O, generating O(2) and a proton gradient subsequently used for ATP formation. It consists of a core antenna complex that captures photons, and an electron transfer chain that converts photonic excitation into a charge separation. The D1/D2 (PsbA/PsbD) reaction center heterodimer binds P680, the primary electron donor of PSII as well as several subsequent electron acceptors. This is Photosystem II protein D1 from Heterocapsa rotundata (Dinoflagellate).